We begin with the raw amino-acid sequence, 933 residues long: MTELKAKGPRAPHVAGGPPSPEVGSPLLCRPAAGPFEGSQTSDTLPEVSAIPISLDGLLFPRLCQGQDLPDEKTQDQQSLSDVEGAYSRAEATRGTGGSSSRPPGKDSGLLDSVLDTLLAPSGPGQSQPSPPACEVTSSWCLFGPELPEDPPAAPATQRVLSPLMSRSGGKTGDSSGTAAAHKVLPRGLSPSRQLLLPASGSPHWSGAPVKPSPQPTAVEVEEEDGSGSEDSAGPLLKGKPRVPGGAAAGGGAAAVPPGAAAGGVGLVPKEDSRFSAPRVALVEQDAPMAPGRSPLATTMMDFIHVPIVPLNHALLAARTRQLLEDESYDGGAGAASAFAPPQSSPSASSTPVAVGDFPDCAYPPDAEPKDNAYPLYGDFQPPALKIKEEEEGAEASARSPGSYLVAGANPAAFPDYPLGPPPQLPPRAPPSRPGEAAVTAAPASASVSSASSPGSTLECILYKAEGAPPQQGQFAPPPCKAPGAGGCLLPRDGLPSTSASAAAAGAAPALYPALGLNGLPQLGYQAAVLKESLQQVYPPYLNYLRPDSEASQSPQYSFESLPQKICLICGDEASGCHYGVLTCGSCKVFFKRAMEGQHNYLCAGRNDCIVDKIRRKNCPACRLRKCCQAGMVLGGRKFKKFNKVRVMRALDAVALPQPVGIPNESQVLSQRFTFSPGQDIQLIPPLIKLLMSIEPDVIYAGHDNSKPDTSSSLLTSLNQLGERQLLSVVKWSKSLPGFRNLHIDDQITLIQYSWMSLMVFGLGWRSYKHVSGQMLYFAPDLILNEQRMKESSFYSLCLTMWQIPQEFVKLQVSQEEFLCMKVLLLLNTIPLEGLRSQTQFEEMRSSYIRELIKAIGLRQKGVVPSSQRFYQLTKLLDNLHDLVKQLHLYCLNTFIQSRALSVEFPEMMSEVIAAQLPKILAGMVKPLLFHKK.

A disordered region spans residues 1-48; the sequence is MTELKAKGPRAPHVAGGPPSPEVGSPLLCRPAAGPFEGSQTSDTLPEV. Residues 1 to 164 form an AF3; mediates transcriptional activation region; the sequence is MTELKAKGPR…PATQRVLSPL (164 aa). The tract at residues 1–566 is modulating, Pro-Rich; that stretch reads MTELKAKGPR…YSFESLPQKI (566 aa). A Phosphoserine modification is found at serine 20. The short motif at 55-59 is the LXXL motif 1 element; it reads LDGLL. Residues 66 to 255 form a disordered region; sequence GQDLPDEKTQ…GAAAGGGAAA (190 aa). Serine 81 bears the Phosphoserine mark. Positions 115–119 match the LXXL motif 2 motif; it reads LDTLL. Phosphoserine occurs at positions 130 and 162. The interval 165–305 is mediates transcriptional transrepression; the sequence is MSRSGGKTGD…LATTMMDFIH (141 aa). Positions 183-187 match the Nuclear localization signal motif; it reads KVLPR. Residues serine 190 and serine 213 each carry the phosphoserine modification. Phosphoserine; by MAPK1 is present on serine 294. Positions 331 to 378 are disordered; that stretch reads GGAGAASAFAPPQSSPSASSTPVAVGDFPDCAYPPDAEPKDNAYPLYG. The segment covering 335–350 has biased composition (low complexity); the sequence is AASAFAPPQSSPSASS. Serine 345 carries the post-translational modification Phosphoserine; by MAPK. Lysine 388 participates in a covalent cross-link: Glycyl lysine isopeptide (Lys-Gly) (interchain with G-Cter in SUMO); alternate. Lysine 388 participates in a covalent cross-link: Glycyl lysine isopeptide (Lys-Gly) (interchain with G-Cter in ubiquitin); alternate. The residue at position 400 (serine 400) is a Phosphoserine; by CDK2. The disordered stretch occupies residues 415 to 454; it reads PDYPLGPPPQLPPRAPPSRPGEAAVTAAPASASVSSASSP. Pro residues predominate over residues 418 to 433; sequence PLGPPPQLPPRAPPSR. Over residues 437 to 454 the composition is skewed to low complexity; sequence AAVTAAPASASVSSASSP. The segment at 456–546 is AF1; mediates transcriptional activation; it reads STLECILYKA…VYPPYLNYLR (91 aa). Lysine 531 is covalently cross-linked (Glycyl lysine isopeptide (Lys-Gly) (interchain with G-Cter in SUMO)). 2 consecutive NR C4-type zinc fingers follow at residues 567–587 and 603–627; these read CLIC…CGSC and CAGR…LRKC. The nuclear receptor DNA-binding region spans 567 to 639; sequence CLICGDEASG…AGMVLGGRKF (73 aa). The residue at position 676 (serine 676) is a Phosphoserine. The region spanning 679-913 is the NR LBD domain; sequence QDIQLIPPLI…EFPEMMSEVI (235 aa). An AF2; mediates transcriptional activation region spans residues 687 to 933; it reads LIKLLMSIEP…MVKPLLFHKK (247 aa).

The protein belongs to the nuclear hormone receptor family. In terms of assembly, interacts with SMARD1 and UNC45A. Interacts with CUEDC2; the interaction promotes ubiquitination, decreases sumoylation, and represses transcriptional activity. Interacts with PIAS3; the interaction promotes sumoylation of PR in a hormone-dependent manner, inhibits DNA-binding, and alters nuclear export. Interacts with SP1; the interaction requires ligand-induced phosphorylation on Ser-345 by ERK1/2-MAPK. Interacts with PRMT2. Interacts with NCOA2 and NCOA1. Interacts with KLF9. Interacts with GTF2B. In terms of processing, phosphorylated on multiple serine sites. Several of these sites are hormone-dependent. Phosphorylation on Ser-294 is highly hormone-dependent and modulates ubiquitination and sumoylation on Lys-388. Phosphorylation on Ser-345 also requires induction by hormone. Basal phosphorylation on Ser-81, Ser-162, Ser-190 and Ser-400 is increased in response to progesterone and can be phosphorylated in vitro by the CDK2-A1 complex. Increased levels of phosphorylation on Ser-400 also in the presence of EGF, heregulin, IGF, PMA and FBS. Phosphorylation at this site by CDK2 is ligand-independent, and increases nuclear translocation and transcriptional activity. Phosphorylation at Ser-162 and Ser-294, but not at Ser-190, is impaired during the G(2)/M phase of the cell cycle. Phosphorylation on Ser-345 by ERK1/2 MAPK is required for interaction with SP1. Post-translationally, sumoylation is hormone-dependent and represses transcriptional activity. Sumoylation on all three sites is enhanced by PIAS3. Desumoylated by SENP1. Sumoylation on Lys-388, the main site of sumoylation, is repressed by ubiquitination on the same site, and modulated by phosphorylation at Ser-294. Ubiquitination is hormone-dependent and represses sumoylation on the same site. Promoted by MAPK-mediated phosphorylation on Ser-294. In terms of processing, palmitoylated by ZDHHC7 and ZDHHC21. Palmitoylation is required for plasma membrane targeting and for rapid intracellular signaling via ERK and AKT kinases and cAMP generation.

It localises to the nucleus. The protein resides in the cytoplasm. The steroid hormones and their receptors are involved in the regulation of eukaryotic gene expression and affect cellular proliferation and differentiation in target tissues. Transcriptional activator of several progesteron-dependent promoters in a variety of cell types. Involved in activation of SRC-dependent MAPK signaling on hormone stimulation. This is Progesterone receptor (PGR) from Trachypithecus obscurus (Dusky leaf-monkey).